Reading from the N-terminus, the 349-residue chain is Glucose 1-dehydrogenase 1 (349 aa).

Cys-39 lines the Zn(2+) pocket. Residue Thr-41 coordinates substrate. Residues His-64 and Glu-65 each coordinate Zn(2+). Positions 110 and 146 each coordinate substrate. Residue Glu-146 participates in Zn(2+) binding. NADP(+)-binding positions include 178–181, 260–262, and 289–291; these read AGPI, LGV, and SVN. Asn-291 provides a ligand contact to substrate.

The protein belongs to the zinc-containing alcohol dehydrogenase family. Glucose 1-dehydrogenase subfamily. Requires Zn(2+) as cofactor.

The catalysed reaction is D-glucose + NAD(+) = D-glucono-1,5-lactone + NADH + H(+). It carries out the reaction D-glucose + NADP(+) = D-glucono-1,5-lactone + NADPH + H(+). Catalyzes the NAD(P)(+)-dependent oxidation of D-glucose to D-gluconate via gluconolactone. Can utilize both NAD(+) and NADP(+) as electron acceptor. Is involved in the degradation of glucose through a non-phosphorylative variant of the Entner-Doudoroff pathway. The polypeptide is Glucose 1-dehydrogenase 1 (Caldivirga maquilingensis (strain ATCC 700844 / DSM 13496 / JCM 10307 / IC-167)).